Reading from the N-terminus, the 226-residue chain is Leucyl/phenylalanyl-tRNA--protein transferase (226 aa).

The protein belongs to the L/F-transferase family.

Its subcellular location is the cytoplasm. The catalysed reaction is N-terminal L-lysyl-[protein] + L-leucyl-tRNA(Leu) = N-terminal L-leucyl-L-lysyl-[protein] + tRNA(Leu) + H(+). The enzyme catalyses N-terminal L-arginyl-[protein] + L-leucyl-tRNA(Leu) = N-terminal L-leucyl-L-arginyl-[protein] + tRNA(Leu) + H(+). It catalyses the reaction L-phenylalanyl-tRNA(Phe) + an N-terminal L-alpha-aminoacyl-[protein] = an N-terminal L-phenylalanyl-L-alpha-aminoacyl-[protein] + tRNA(Phe). In terms of biological role, functions in the N-end rule pathway of protein degradation where it conjugates Leu, Phe and, less efficiently, Met from aminoacyl-tRNAs to the N-termini of proteins containing an N-terminal arginine or lysine. This Pseudomonas fluorescens (strain Pf0-1) protein is Leucyl/phenylalanyl-tRNA--protein transferase.